The following is a 176-amino-acid chain: SDCQVSNIQVMQNFDRSRYTGRWYAVAKKDPVGLFLLDNVVAQFSVDESGKVTATAHGRVIILNNWEMCANMFGTFEDTPDPAKFKMRYWGAASYLQTGNDDHWVIDTDYDNYAIHYSCREVDLDGTCLDGYSFIFSRHPTGLRPEDQKIVTDKKKEICFLGKYRRVGHTGFCESS.

An N-acetylserine modification is found at Ser-1. Cystine bridges form between Cys-3-Cys-159, Cys-69-Cys-173, and Cys-119-Cys-128. Residue Gln-97 coordinates substrate.

It belongs to the calycin superfamily. Lipocalin family.

The protein localises to the secreted. Functionally, RBP delivers retinol from the liver stores to the peripheral tissues. In plasma, the RBP-retinol complex interacts with transthyretin, this prevents its loss by filtration through the kidney glomeruli. In Oncorhynchus mykiss (Rainbow trout), this protein is Retinol-binding protein 4-A (rbp4a).